A 405-amino-acid chain; its full sequence is 1-deoxy-D-xylulose 5-phosphate reductoisomerase (405 aa).

Threonine 16, glycine 17, serine 18, isoleucine 19, glycine 42, arginine 43, asparagine 44, and asparagine 130 together coordinate NADPH. Lysine 131 contributes to the 1-deoxy-D-xylulose 5-phosphate binding site. NADPH is bound at residue glutamate 132. Aspartate 156 is a Mn(2+) binding site. Serine 157, glutamate 158, serine 192, and histidine 215 together coordinate 1-deoxy-D-xylulose 5-phosphate. A Mn(2+)-binding site is contributed by glutamate 158. NADPH is bound at residue glycine 221. 4 residues coordinate 1-deoxy-D-xylulose 5-phosphate: serine 228, asparagine 233, lysine 234, and glutamate 237. Glutamate 237 is a Mn(2+) binding site.

The protein belongs to the DXR family. Requires Mg(2+) as cofactor. Mn(2+) serves as cofactor.

It carries out the reaction 2-C-methyl-D-erythritol 4-phosphate + NADP(+) = 1-deoxy-D-xylulose 5-phosphate + NADPH + H(+). It participates in isoprenoid biosynthesis; isopentenyl diphosphate biosynthesis via DXP pathway; isopentenyl diphosphate from 1-deoxy-D-xylulose 5-phosphate: step 1/6. Functionally, catalyzes the NADPH-dependent rearrangement and reduction of 1-deoxy-D-xylulose-5-phosphate (DXP) to 2-C-methyl-D-erythritol 4-phosphate (MEP). This chain is 1-deoxy-D-xylulose 5-phosphate reductoisomerase, found in Pasteurella multocida (strain Pm70).